A 309-amino-acid chain; its full sequence is uncharacterized protein (309 aa).

The segment at 272 to 291 (PSLDAPSETVEAFPEPQKNL) is disordered.

This is an uncharacterized protein from Bacillus subtilis (strain 168).